The primary structure comprises 118 residues: Holo-[acyl-carrier-protein] synthase (118 aa).

The Mg(2+) site is built by aspartate 8 and glutamate 58.

This sequence belongs to the P-Pant transferase superfamily. AcpS family. It depends on Mg(2+) as a cofactor.

Its subcellular location is the cytoplasm. It carries out the reaction apo-[ACP] + CoA = holo-[ACP] + adenosine 3',5'-bisphosphate + H(+). Functionally, transfers the 4'-phosphopantetheine moiety from coenzyme A to a Ser of acyl-carrier-protein. This is Holo-[acyl-carrier-protein] synthase from Listeria innocua serovar 6a (strain ATCC BAA-680 / CLIP 11262).